A 129-amino-acid chain; its full sequence is ATP synthase epsilon chain (129 aa).

Belongs to the ATPase epsilon chain family. In terms of assembly, F-type ATPases have 2 components, CF(1) - the catalytic core - and CF(0) - the membrane proton channel. CF(1) has five subunits: alpha(3), beta(3), gamma(1), delta(1), epsilon(1). CF(0) has three main subunits: a, b and c.

Its subcellular location is the cell inner membrane. Produces ATP from ADP in the presence of a proton gradient across the membrane. This chain is ATP synthase epsilon chain, found in Campylobacter concisus (strain 13826).